Reading from the N-terminus, the 2173-residue chain is Mediator of DNA damage checkpoint protein 1 (2173 aa).

The segment covering 1–19 (MEDTQAIDWDVEEEEETEQ) has biased composition (acidic residues). Positions 1 to 22 (MEDTQAIDWDVEEEEETEQSSE) are disordered. The interval 1–150 (MEDTQAIDWD…SRGPLTVEET (150 aa)) is interaction with CHEK2. The segment at 2 to 222 (EDTQAIDWDV…PFAFNLNSDT (221 aa)) is interaction with the MRN complex. Phosphothreonine is present on threonine 4. The FHA domain occupies 54 to 105 (NVVGRMPDCSVALPFPSISKQHAEIEILAWDKAPILRDCGSLNGTQILRPPK). Serine 108 carries the phosphoserine modification. Residues 145–570 (LTVEETPRVQ…PAKLLVVSLE (426 aa)) form a required for nuclear localization (NLS1) region. Threonine 146 carries the phosphothreonine modification. 4 positions are modified to phosphoserine: serine 168, serine 176, serine 198, and serine 220. The tract at residues 198 to 320 (SDEEGHSPVL…PPGRPAEVHL (123 aa)) is disordered. Threonine 222 is subject to Phosphothreonine. Low complexity predominate over residues 227–244 (GQQSATEEASSAARRGAT). Over residues 259 to 276 (QLEKDQPSVKERDNDTKV) the composition is skewed to basic and acidic residues. Serine 301 bears the Phosphoserine mark. Threonine 303 carries the phosphothreonine modification. Residues 308–320 (DSRPPGRPAEVHL) show a composition bias toward basic and acidic residues. Serine 331 is modified (phosphoserine). The residue at position 333 (threonine 333) is a Phosphothreonine. The disordered stretch occupies residues 359 to 383 (GTRGPGAPGLSHLQESQAGSDTDVE). A phosphoserine mark is found at serine 374 and serine 378. A Phosphothreonine modification is found at threonine 380. A phosphoserine mark is found at serine 396, serine 399, and serine 404. Threonine 406 bears the Phosphothreonine mark. Serine 413 carries the post-translational modification Phosphoserine. A disordered region spans residues 444–515 (LQRSQTTTGR…SSPGIHLERS (72 aa)). Threonine 451 carries the phosphothreonine modification. Phosphoserine is present on serine 455. At threonine 457 the chain carries Phosphothreonine. Phosphoserine is present on residues serine 487, serine 497, serine 500, serine 506, serine 507, and serine 515. Phosphothreonine is present on threonine 525. Serine 592 is subject to Phosphoserine. Lysine 618 participates in a covalent cross-link: Glycyl lysine isopeptide (Lys-Gly) (interchain with G-Cter in SUMO1); alternate. Residue lysine 618 forms a Glycyl lysine isopeptide (Lys-Gly) (interchain with G-Cter in SUMO2); alternate linkage. Serine 631 bears the Phosphoserine mark. Disordered stretches follow at residues 652-697 (VDTD…EDPD) and 773-1770 (HLEA…TLRS). Over residues 673-687 (GREREQHVGRTKDSE) the composition is skewed to basic and acidic residues. Residues 688–697 (DNCDDSEDPD) show a composition bias toward acidic residues. Phosphoserine is present on residues serine 782 and serine 795. Lysine 814 carries the N6-acetyllysine modification. Composition is skewed to basic and acidic residues over residues 821-846 (ETAE…ERQT), 853-864 (ELTRGIQDREQK), 870-903 (DTQR…KEIQ), and 916-953 (AFER…RGEP). 5 positions are modified to phosphoserine: serine 957, serine 1000, serine 1035, serine 1070, and serine 1088. Over residues 957–969 (SQDQKGQASSPTS) the composition is skewed to polar residues. Residues 1079–1090 (TIRKTGQDRSQE) are compositionally biased toward basic and acidic residues. Positions 1105 to 1115 (PKPKIITRKSS) are enriched in basic residues. The span at 1131–1156 (PSTSTAQPVTPKPTSQATRSRTNRSS) shows a compositional bias: polar residues. The interaction with the PRKDC complex stretch occupies residues 1150–1694 (SRTNRSSVKT…KNRSSVKTPE (545 aa)). Low complexity predominate over residues 1157–1169 (VKTPEPVVPTVPE). The residue at position 1159 (threonine 1159) is a Phosphothreonine. Over residues 1171 to 1189 (QPSTSTDQPVASEPTSQAT) the composition is skewed to polar residues. Threonine 1200 carries the post-translational modification Phosphothreonine. The residue at position 1237 (serine 1237) is a Phosphoserine. A phosphothreonine mark is found at threonine 1241, threonine 1282, and threonine 1304. Residues 1280–1292 (VKTPEPVVPTVPE) show a composition bias toward low complexity. The span at 1294 to 1320 (QPSTSTDQPVTSEPTSQATRGRTNRSS) shows a compositional bias: polar residues. Positions 1321–1333 (VKTPEPVVPTVPE) are enriched in low complexity. A compositionally biased stretch (polar residues) spans 1335-1353 (QPSTSTDQPVASEPTSQAT). The segment covering 1390-1402 (TSRTTRSRTNMSS) has biased composition (low complexity). Composition is skewed to polar residues over residues 1418–1434 (PSTS…TYQP), 1456–1487 (KLQS…SVKS), 1499–1527 (QPST…SSVK), and 1540–1559 (QPST…QATR). 2 positions are modified to phosphoserine: serine 1483 and serine 1484. The residue at position 1486 (lysine 1486) is an N6-acetyllysine. Threonine 1509 and threonine 1550 each carry phosphothreonine. Residues 1567–1578 (VKTPKIVVPTVP) are compositionally biased toward low complexity. A compositionally biased stretch (polar residues) spans 1581 to 1598 (QASTSTDQPVTSEPTSRT). Phosphothreonine occurs at positions 1617 and 1632. Polar residues predominate over residues 1626–1639 (STDQPITPKPTSRA). Serine 1648 carries the post-translational modification Phosphoserine. Residues threonine 1651 and threonine 1673 each carry the phosphothreonine modification. Over residues 1664-1680 (PSTSRSQLVTPEPTSRA) the composition is skewed to polar residues. The residue at position 1688 (serine 1688) is a Phosphoserine. Residues threonine 1692, threonine 1714, threonine 1748, and threonine 1755 each carry the phosphothreonine modification. The span at 1705-1721 (PTTSTDQPVTPKPTSRA) shows a compositional bias: polar residues. A compositionally biased stretch (polar residues) spans 1761 to 1770 (QGSQSKTLRS). Serine 1765 is subject to Phosphoserine. Threonine 1781 carries the post-translational modification Phosphothreonine. The segment at 1782 to 2173 (PEFQSPVTTD…VLSPLEMSST (392 aa)) is required for nuclear localization (NLS2). Serine 1786 and serine 1795 each carry phosphoserine. A disordered region spans residues 1809-1971 (RATGNPGSLT…NRSLRRTKLN (163 aa)). Lysine 1824 is covalently cross-linked (Glycyl lysine isopeptide (Lys-Gly) (interchain with G-Cter in SUMO2)). Residue serine 1859 is modified to Phosphoserine. Lysine 1874 participates in a covalent cross-link: Glycyl lysine isopeptide (Lys-Gly) (interchain with G-Cter in SUMO2). Phosphothreonine is present on threonine 1884. Phosphoserine is present on serine 1904. Over residues 1907 to 1920 (HQKQPQRGEVSQKT) the composition is skewed to polar residues. Lysine 1924 is covalently cross-linked (Glycyl lysine isopeptide (Lys-Gly) (interchain with G-Cter in SUMO1); alternate). Lysine 1924 is covalently cross-linked (Glycyl lysine isopeptide (Lys-Gly) (interchain with G-Cter in SUMO2); alternate). Residues 1931-1941 (AEKPGKEEDVM) are compositionally biased toward basic and acidic residues. Position 1942 is a phosphothreonine (threonine 1942). 2 BRCT domains span residues 1976-2054 (APKV…EYVV) and 2075-2166 (RERR…FVLS). Arginine 2027 carries the omega-N-methylarginine modification.

As to quaternary structure, homodimer. Interacts with H2AX, which requires phosphorylation of H2AX on 'Ser-139'. Interacts with the MRN complex, composed of MRE11, RAD50, and NBN. Interacts with CHEK2, which requires ATM-mediated phosphorylation of 'Thr-68' within the FHA domain of CHEK2. Interacts constitutively with the BRCA1-BARD1 complex, SMC1A and TP53BP1. Interacts with ATM and FANCD2, and these interactions are reduced upon DNA damage. Also interacts with the PRKDC complex, composed of XRCC6/KU70, XRCC5/KU80 and PRKDC/XRCC7. This interaction may be required for PRKDC autophosphorylation, which is essential for DNA double strand break (DSB) repair. When phosphorylated by ATM, interacts with RNF8 (via FHA domain). Interacts with CEP164. When phosphorylated, interacts with APTX (via FHA-like domain). Interacts (when phosphorylated) with TOPBP1; promoting TOPBP1 localization to DNA damage sites during mitosis. Interacts (when phosphorylated) with NBN; promoting NBN and MRN complex localization to DNA damage sites. Phosphorylated upon exposure to ionizing radiation (IR), ultraviolet radiation (UV), and hydroxyurea (HU). Phosphorylation in response to IR requires ATM, NBN, and possibly CHEK2. Also phosphorylated during the G2/M phase of the cell cycle and during activation of the mitotic spindle checkpoint. Phosphorylation at Thr-4 by ATM stabilizes and enhances homodimerization via the FHA domain. Phosphorylated at Ser-168 and Ser-198 by CK2 in response to DNA damage during mitosis, promoting interaction with TOPBP1. Phosphorylated by CK2 in response to DNA damage, promoting interaction with NBN and recruitment of the MRN complex to DNA damage sites. Post-translationally, sumoylation at Lys-1924 by PIAS4 following DNA damage promotes ubiquitin-mediated degradation. In terms of processing, ubiquitinated by RNF4, leading to proteasomal degradation; undergoes 'Lys-48'-linked polyubiquitination.

The protein resides in the nucleus. The protein localises to the chromosome. Its function is as follows. Histone reader protein required for checkpoint-mediated cell cycle arrest in response to DNA damage within both the S phase and G2/M phases of the cell cycle. Specifically recognizes and binds histone H2AX phosphorylated at 'Ser-139', a marker of DNA damage, serving as a scaffold for the recruitment of DNA repair and signal transduction proteins to discrete foci of DNA damage sites. Also required for downstream events subsequent to the recruitment of these proteins. These include phosphorylation and activation of the ATM, CHEK1 and CHEK2 kinases, and stabilization of TP53/p53 and apoptosis. ATM and CHEK2 may also be activated independently by a parallel pathway mediated by TP53BP1. Required for chromosomal stability during mitosis by promoting recruitment of TOPBP1 to DNA double strand breaks (DSBs): TOPBP1 forms filamentous assemblies that bridge MDC1 and tether broken chromosomes during mitosis. Required for the repair of DSBs via homologous recombination by promoting recruitment of NBN component of the MRN complex to DSBs. The polypeptide is Mediator of DNA damage checkpoint protein 1 (MDC1) (Macaca mulatta (Rhesus macaque)).